The sequence spans 311 residues: Protein translocase subunit SecF (311 aa).

Transmembrane regions (helical) follow at residues 23–42, 140–160, 164–184, 194–214, 246–266, and 272–292; these read VSYS…ISIY, IEAG…YIGV, WYFG…ALGF, LSTI…SVVI, ILTV…GGKA, and VLVF…SAPI.

The protein belongs to the SecD/SecF family. SecF subfamily. In terms of assembly, forms a complex with SecD. Part of the essential Sec protein translocation apparatus which comprises SecA, SecYEG and auxiliary proteins SecDF-YajC and YidC.

It is found in the cell inner membrane. In terms of biological role, part of the Sec protein translocase complex. Interacts with the SecYEG preprotein conducting channel. SecDF uses the proton motive force (PMF) to complete protein translocation after the ATP-dependent function of SecA. In Rickettsia prowazekii (strain Madrid E), this protein is Protein translocase subunit SecF.